We begin with the raw amino-acid sequence, 422 residues long: Serine protease HTRA2, mitochondrial (422 aa).

Residues 1-17 constitute a mitochondrion transit peptide; it reads MALRGSHRLEVIFKRCI. The propeptide occupies 18–74; it reads ASPVLHSQAGNRRSSQLAIKGVDPNSNGNSGQYQQNGEHKEKGWRRLVRFFVPFSLG. The segment at 28–55 is disordered; the sequence is NRRSSQLAIKGVDPNSNGNSGQYQQNGE. Low complexity predominate over residues 42 to 53; that stretch reads NSNGNSGQYQQN. A helical transmembrane segment spans residues 64-82; the sequence is LVRFFVPFSLGAAVSAAII. 2 short sequence motifs (IAP-binding) span residues 75-78 and 94-97; these read AAVS and SKMT. A serine protease region spans residues 139–302; the sequence is SNGSGFIIEQ…IPIDYVKVFL (164 aa). Catalysis depends on charge relay system residues His157, Asp189, and Ser266. A PDZ domain is found at 325-410; sequence MGITMLTLTP…TLDIVILRGV (86 aa).

This sequence belongs to the peptidase S1C family. In terms of assembly, interacts with th/DIAP1 (via BIR 2 domain).

The protein resides in the mitochondrion intermembrane space. The protein localises to the mitochondrion membrane. It catalyses the reaction Cleavage of non-polar aliphatic amino-acids at the P1 position, with a preference for Val, Ile and Met. At the P2 and P3 positions, Arg is selected most strongly with a secondary preference for other hydrophilic residues.. Its function is as follows. Serine protease that shows proteolytic activity against a non-specific substrate beta-casein. Promotes or induces cell death either by direct binding to and inhibition of BIRC proteins (also called inhibitor of apoptosis proteins, IAPs), leading to an increase in caspase activity, or by a BIRC inhibition-independent, caspase-independent and serine protease activity-dependent mechanism. Can antagonize antiapoptotic activity of th/Diap1 by directly inducing the degradation of th/Diap1. The protein is Serine protease HTRA2, mitochondrial of Drosophila sechellia (Fruit fly).